The sequence spans 710 residues: Elongation factor G (710 aa).

A tr-type G domain is found at Ser-8–Met-290. Residues Ala-17–Thr-24, Asp-88–His-92, and Asn-142–Asp-145 each bind GTP.

The protein belongs to the TRAFAC class translation factor GTPase superfamily. Classic translation factor GTPase family. EF-G/EF-2 subfamily.

It localises to the cytoplasm. In terms of biological role, catalyzes the GTP-dependent ribosomal translocation step during translation elongation. During this step, the ribosome changes from the pre-translocational (PRE) to the post-translocational (POST) state as the newly formed A-site-bound peptidyl-tRNA and P-site-bound deacylated tRNA move to the P and E sites, respectively. Catalyzes the coordinated movement of the two tRNA molecules, the mRNA and conformational changes in the ribosome. The chain is Elongation factor G from Buchnera aphidicola subsp. Baizongia pistaciae (strain Bp).